Here is a 692-residue protein sequence, read N- to C-terminus: Elongation factor G (692 aa).

The tr-type G domain occupies 8–282; that stretch reads EKTRNIGIMA…AVIDYLPSPL (275 aa). Residues 17–24, 81–85, and 135–138 contribute to the GTP site; these read AHVDAGKT, DTPGH, and NKMD.

Belongs to the TRAFAC class translation factor GTPase superfamily. Classic translation factor GTPase family. EF-G/EF-2 subfamily.

Its subcellular location is the cytoplasm. Functionally, catalyzes the GTP-dependent ribosomal translocation step during translation elongation. During this step, the ribosome changes from the pre-translocational (PRE) to the post-translocational (POST) state as the newly formed A-site-bound peptidyl-tRNA and P-site-bound deacylated tRNA move to the P and E sites, respectively. Catalyzes the coordinated movement of the two tRNA molecules, the mRNA and conformational changes in the ribosome. The polypeptide is Elongation factor G (Streptococcus agalactiae serotype Ia (strain ATCC 27591 / A909 / CDC SS700)).